A 47-amino-acid polypeptide reads, in one-letter code: Potamin-1 (47 aa).

3 disulfides stabilise this stretch: cysteine 3/cysteine 40, cysteine 6/cysteine 24, and cysteine 7/cysteine 36.

In terms of biological role, inhibitor of serine proteases chymotrypsin, papain and trypsin. Has strong antifungal activity against C.albicans and R.solani. Has antibacterial activity against the Gram-positive bacterium C.michiganense, but lacks antibacterial activity against the Gram-positive bacterium S.aureus. Lacks hemolytic activity against human erythrocytes. This is Potamin-1 from Solanum tuberosum (Potato).